We begin with the raw amino-acid sequence, 86 residues long: Large ribosomal subunit protein uL23 (86 aa).

This sequence belongs to the universal ribosomal protein uL23 family. Part of the 50S ribosomal subunit. Contacts protein L29.

In terms of biological role, binds to 23S rRNA. One of the proteins that surrounds the polypeptide exit tunnel on the outside of the ribosome. This Methanococcus maripaludis (strain C5 / ATCC BAA-1333) protein is Large ribosomal subunit protein uL23.